We begin with the raw amino-acid sequence, 189 residues long: Protein sisterless A (189 aa).

The disordered stretch occupies residues 93–124; that stretch reads DCRGSGSGSGSGSGSDVKDAQRQRAESCRKSR. The span at 108–121 shows a compositional bias: basic and acidic residues; that stretch reads DVKDAQRQRAESCR.

In terms of assembly, homodimer. Interacts with dpn (via bHLH motif). Interacts with da (via bHLH motif). Interacts with Bap60. As to expression, localizes to all the embryonic nuclei until nuclear cycle 9, when expression ceases in the prepole cell nuclei. Associates with the somatic nuclei through cycle 10. By nuclear cycle 12, distributes uniformly in the somatic portion of the embryo and no longer associates with the nuclei. After early cycle 14 (beginning of cellularization) there is very little or no expression in the periphery of the embryo or in either the somatic or germ cells. In the yolk, accumulates at the nuclei from nuclear cycle 8 until 10-11 hours after fertilization.

It localises to the nucleus. Functionally, involved in sex determination and dosage compensation. Required for proper expression of Sxl in embryonic somatic cells. Also has an essential function in the yolk nuclei. Involved in endoderm migration and midgut formation. The sequence is that of Protein sisterless A (sisA) from Drosophila melanogaster (Fruit fly).